A 169-amino-acid chain; its full sequence is Ribosome maturation factor RimM (169 aa).

In terms of domain architecture, PRC barrel spans 97 to 169; that stretch reads PGEYYWYQLI…VITVDWDMNF (73 aa).

It belongs to the RimM family. Binds ribosomal protein uS19.

Its subcellular location is the cytoplasm. Its function is as follows. An accessory protein needed during the final step in the assembly of 30S ribosomal subunit, possibly for assembly of the head region. Essential for efficient processing of 16S rRNA. May be needed both before and after RbfA during the maturation of 16S rRNA. It has affinity for free ribosomal 30S subunits but not for 70S ribosomes. In Legionella pneumophila subsp. pneumophila (strain Philadelphia 1 / ATCC 33152 / DSM 7513), this protein is Ribosome maturation factor RimM.